The sequence spans 187 residues: Elongation factor P (187 aa).

This sequence belongs to the elongation factor P family.

The protein resides in the cytoplasm. The protein operates within protein biosynthesis; polypeptide chain elongation. Functionally, involved in peptide bond synthesis. Stimulates efficient translation and peptide-bond synthesis on native or reconstituted 70S ribosomes in vitro. Probably functions indirectly by altering the affinity of the ribosome for aminoacyl-tRNA, thus increasing their reactivity as acceptors for peptidyl transferase. This chain is Elongation factor P, found in Desulfatibacillum aliphaticivorans.